The following is a 392-amino-acid chain: S-adenosylmethionine synthase (392 aa).

Histidine 22 is an ATP binding site. Residue aspartate 24 coordinates Mg(2+). Glutamate 50 lines the K(+) pocket. The L-methionine site is built by glutamate 63 and glutamine 106. Residues 106–116 form a flexible loop region; that stretch reads QSPDITQGVTL. ATP is bound by residues 170-172, 236-237, aspartate 245, 251-252, alanine 268, and lysine 272; these read DGK, KF, and RK. Aspartate 245 lines the L-methionine pocket. Lysine 276 provides a ligand contact to L-methionine.

Belongs to the AdoMet synthase family. As to quaternary structure, homotetramer; dimer of dimers. Mg(2+) is required as a cofactor. The cofactor is K(+).

It localises to the cytoplasm. The catalysed reaction is L-methionine + ATP + H2O = S-adenosyl-L-methionine + phosphate + diphosphate. It participates in amino-acid biosynthesis; S-adenosyl-L-methionine biosynthesis; S-adenosyl-L-methionine from L-methionine: step 1/1. In terms of biological role, catalyzes the formation of S-adenosylmethionine (AdoMet) from methionine and ATP. The overall synthetic reaction is composed of two sequential steps, AdoMet formation and the subsequent tripolyphosphate hydrolysis which occurs prior to release of AdoMet from the enzyme. In Sulfurimonas denitrificans (strain ATCC 33889 / DSM 1251) (Thiomicrospira denitrificans (strain ATCC 33889 / DSM 1251)), this protein is S-adenosylmethionine synthase.